The chain runs to 439 residues: Chromosomal replication initiator protein DnaA (439 aa).

The segment at 1-72 is domain I, interacts with DnaA modulators; that stretch reads MEQFSAFKLL…SKLYDDIRAV (72 aa). The domain II stretch occupies residues 72–99; it reads VRFVNEQDFFINLAKLEEDNRETLYQSS. The domain III, AAA+ region stretch occupies residues 100–322; sequence GLSKNFTFKN…GIATKLLFYV (223 aa). ATP is bound by residues Gly144, Gly146, Lys147, and Thr148. The tract at residues 323–439 is domain IV, binds dsDNA; that stretch reads KTTKQNLINN…LQDIITSLVI (117 aa).

It belongs to the DnaA family. Oligomerizes as a right-handed, spiral filament on DNA at oriC.

Its subcellular location is the cytoplasm. Its function is as follows. Plays an essential role in the initiation and regulation of chromosomal replication. ATP-DnaA binds to the origin of replication (oriC) to initiate formation of the DNA replication initiation complex once per cell cycle. Binds the DnaA box (a 9 base pair repeat at the origin) and separates the double-stranded (ds)DNA. Forms a right-handed helical filament on oriC DNA; dsDNA binds to the exterior of the filament while single-stranded (ss)DNA is stabiized in the filament's interior. The ATP-DnaA-oriC complex binds and stabilizes one strand of the AT-rich DNA unwinding element (DUE), permitting loading of DNA polymerase. After initiation quickly degrades to an ADP-DnaA complex that is not apt for DNA replication. Binds acidic phospholipids. The protein is Chromosomal replication initiator protein DnaA of Mycoplasma pneumoniae (strain ATCC 29342 / M129 / Subtype 1) (Mycoplasmoides pneumoniae).